The primary structure comprises 157 residues: 2-C-methyl-D-erythritol 2,4-cyclodiphosphate synthase (157 aa).

The a divalent metal cation site is built by Asp-8 and His-10. Residues 8–10 (DVH) and 34–35 (HS) each bind 4-CDP-2-C-methyl-D-erythritol 2-phosphate. Residue His-42 participates in a divalent metal cation binding. Residues 56–58 (DIG), 61–65 (FPDTD), 100–106 (AQAPKMA), 132–135 (TTTE), Phe-139, and Arg-142 each bind 4-CDP-2-C-methyl-D-erythritol 2-phosphate.

It belongs to the IspF family. As to quaternary structure, homotrimer. A divalent metal cation serves as cofactor.

It carries out the reaction 4-CDP-2-C-methyl-D-erythritol 2-phosphate = 2-C-methyl-D-erythritol 2,4-cyclic diphosphate + CMP. It functions in the pathway isoprenoid biosynthesis; isopentenyl diphosphate biosynthesis via DXP pathway; isopentenyl diphosphate from 1-deoxy-D-xylulose 5-phosphate: step 4/6. Functionally, involved in the biosynthesis of isopentenyl diphosphate (IPP) and dimethylallyl diphosphate (DMAPP), two major building blocks of isoprenoid compounds. Catalyzes the conversion of 4-diphosphocytidyl-2-C-methyl-D-erythritol 2-phosphate (CDP-ME2P) to 2-C-methyl-D-erythritol 2,4-cyclodiphosphate (ME-CPP) with a corresponding release of cytidine 5-monophosphate (CMP). In Pseudomonas syringae pv. syringae (strain B728a), this protein is 2-C-methyl-D-erythritol 2,4-cyclodiphosphate synthase.